The chain runs to 408 residues: LL-diaminopimelate aminotransferase (408 aa).

Substrate-binding residues include Y15 and G42. Residues Y72, 108-109 (AK), Y132, N186, Y217, and 245-247 (SFS) contribute to the pyridoxal 5'-phosphate site. K109, Y132, and N186 together coordinate substrate. The residue at position 248 (K248) is an N6-(pyridoxal phosphate)lysine. 2 residues coordinate pyridoxal 5'-phosphate: R256 and N291. Substrate is bound by residues N291 and R386.

Belongs to the class-I pyridoxal-phosphate-dependent aminotransferase family. LL-diaminopimelate aminotransferase subfamily. Homodimer. The cofactor is pyridoxal 5'-phosphate.

It catalyses the reaction (2S,6S)-2,6-diaminopimelate + 2-oxoglutarate = (S)-2,3,4,5-tetrahydrodipicolinate + L-glutamate + H2O + H(+). It functions in the pathway amino-acid biosynthesis; L-lysine biosynthesis via DAP pathway; LL-2,6-diaminopimelate from (S)-tetrahydrodipicolinate (aminotransferase route): step 1/1. Its function is as follows. Involved in the synthesis of meso-diaminopimelate (m-DAP or DL-DAP), required for both lysine and peptidoglycan biosynthesis. Catalyzes the direct conversion of tetrahydrodipicolinate to LL-diaminopimelate. The polypeptide is LL-diaminopimelate aminotransferase (Desulfotalea psychrophila (strain LSv54 / DSM 12343)).